The primary structure comprises 67 residues: Beta-defensin 123 (67 aa).

The signal sequence occupies residues 1–20; that stretch reads MKLLLLTLTVLLLLSQLTPG. Intrachain disulfides connect Cys25-Cys52, Cys32-Cys46, and Cys36-Cys53.

The protein belongs to the beta-defensin family. In terms of tissue distribution, abundant expression in the male reproductive tract only. Expressed abundantly in testis, while expression in epididymis decreased gradually from caput to cauda.

The protein localises to the secreted. Has antibacterial activity. This Macaca mulatta (Rhesus macaque) protein is Beta-defensin 123 (DEFB123).